Reading from the N-terminus, the 333-residue chain is NAC domain-containing protein 26 (333 aa).

Residues 14 to 173 (LPPGFRFHPT…DWAVCRIFHK (160 aa)) form the NAC domain. The DNA-binding element occupies 114–179 (IGMKKTLVFY…IFHKSSGIKK (66 aa)). The disordered stretch occupies residues 143-162 (ADASPPQPPPPPSSAEPPRQ). Over residues 147–157 (PPQPPPPPSSA) the composition is skewed to pro residues.

As to quaternary structure, forms homodimers. Forms heterodimers with NAC20. Forms heterodimers with NAC23. Expressed in developing seeds.

It localises to the nucleus. Functionally, transcription factor that acts redundantly with NAC20 to regulate the expression of genes involved in the biosynthesis of starch and storage proteins in grain. Directly binds to the promoters of starch synthase 1 (SS1), pullulanase (PUL), glutelin A1 (GLUA1), glutelins B4 and B5 (GLUB4 and GLUB5), alpha-globulin and 16 kDa prolamin, and activates their expression. Possesses transactivation activity in yeast. In Oryza sativa subsp. indica (Rice), this protein is NAC domain-containing protein 26.